The chain runs to 209 residues: C-type lectin domain family 6 member A (209 aa).

Residues 1–20 (MVQERHPQRKGVCWTLRLWS) are Cytoplasmic-facing. Residues 21–43 (TAVISMLLLSTCFIASCMVTYQF) form a helical; Signal-anchor for type II membrane protein membrane-spanning segment. Residues 44-209 (TMEKPNRRLS…SICETKKIYL (166 aa)) are Extracellular-facing. 2 disulfides stabilise this stretch: cysteine 64/cysteine 78 and cysteine 79/cysteine 90. Residues 86-203 (FGSSCYLIST…CDSKHNSICE (118 aa)) enclose the C-type lectin domain. Residues valine 116, asparagine 118, and glutamate 122 each contribute to the Ca(2+) site. N-linked (GlcNAc...) asparagine glycosylation is present at asparagine 131. 3 residues coordinate Ca(2+): glutamate 168, asparagine 170, and glutamate 174. Alpha-D-mannopyranose contacts are provided by residues 168–170 (EPN), glutamate 174, tryptophan 182, and 190–191 (ND). Cysteines 176 and 194 form a disulfide. Ca(2+)-binding residues include asparagine 190, aspartate 191, and glutamate 203.

In terms of assembly, associated with FCER1G. Heterodimer with CLEC4D; this heterodimer forms a pattern recognition receptor (PRR) against fungal infection.

Its subcellular location is the cell membrane. In terms of biological role, calcium-dependent lectin that acts as a pattern recognition receptor (PRR) of the innate immune system: specifically recognizes and binds alpha-mannans on C.albicans hypheas. Binding of C.albicans alpha-mannans to this receptor complex leads to phosphorylation of the immunoreceptor tyrosine-based activation motif (ITAM) of FCER1G, triggering activation of SYK, CARD9 and NF-kappa-B, consequently driving maturation of antigen-presenting cells and shaping antigen-specific priming of T-cells toward effector T-helper 1 and T-helper 17 cell subtypes. Also recognizes, in a mannose-dependent manner, allergens from house dust mite and fungi, by promoting cysteinyl leukotriene production. Recognizes soluble elements from the eggs of Shistosoma mansoni altering adaptive immune responses. This Rattus norvegicus (Rat) protein is C-type lectin domain family 6 member A (CLEC6A).